We begin with the raw amino-acid sequence, 508 residues long: Glutamyl-tRNA(Gln) amidotransferase subunit B, mitochondrial (508 aa).

This sequence belongs to the GatB/GatE family. GatB subfamily. Subunit of the heterotrimeric GatFAB amidotransferase (AdT) complex, composed of A, B and F subunits.

It is found in the mitochondrion. The catalysed reaction is L-glutamyl-tRNA(Gln) + L-glutamine + ATP + H2O = L-glutaminyl-tRNA(Gln) + L-glutamate + ADP + phosphate + H(+). Its function is as follows. Allows the formation of correctly charged Gln-tRNA(Gln) through the transamidation of misacylated Glu-tRNA(Gln) in the mitochondria. The reaction takes place in the presence of glutamine and ATP through an activated gamma-phospho-Glu-tRNA(Gln). This Scheffersomyces stipitis (strain ATCC 58785 / CBS 6054 / NBRC 10063 / NRRL Y-11545) (Yeast) protein is Glutamyl-tRNA(Gln) amidotransferase subunit B, mitochondrial.